The primary structure comprises 367 residues: 15-cis-zeta-carotene isomerase, chloroplastic (367 aa).

Residues 1–58 constitute a chloroplast transit peptide; that stretch reads MAVYHLLLSSPPSLLLLPPSPRRPNLTLIRRIPAHPRLGNSTSLLSSSSPVIRKILVR. Transmembrane regions (helical) follow at residues 95 to 115, 137 to 157, 172 to 192, 211 to 231, 269 to 289, and 339 to 359; these read SWVYFGVVLGVVLFILNVVWI, EVAMLMLILIFAIVHSGLASL, VLFAGISLPLAMSTIVYFINH, AIWVANFVSFFFLYPSTFNLL, LWIGNTVAASASLGLIAHHLF, and LPYLAITALTVGAYFAHPLMQ.

Expressed in leaves and at lower levels in roots.

It localises to the plastid. Its subcellular location is the chloroplast membrane. It catalyses the reaction 9,9',15-tri-cis-zeta-carotene = 9,9'-di-cis-zeta-carotene. In terms of biological role, isomerase involved in the biosynthesis of carotenoids. Catalyzes the cis- to trans-conversion of the 15-cis-bond in 9,15,9'-tri-cis-zeta-carotene. The chain is 15-cis-zeta-carotene isomerase, chloroplastic (Z-ISO) from Arabidopsis thaliana (Mouse-ear cress).